The following is a 521-amino-acid chain: GMP synthase [glutamine-hydrolyzing] (521 aa).

Positions 8 to 203 (KILILDFGAQ…VVDVCGCQTL (196 aa)) constitute a Glutamine amidotransferase type-1 domain. Cysteine 85 functions as the Nucleophile in the catalytic mechanism. Active-site residues include histidine 177 and glutamate 179. Positions 204-396 (WTAANIIDDQ…LGLPRTMVYR (193 aa)) constitute a GMPS ATP-PPase domain. 231–237 (SGGVDSS) serves as a coordination point for ATP.

Homodimer.

It catalyses the reaction XMP + L-glutamine + ATP + H2O = GMP + L-glutamate + AMP + diphosphate + 2 H(+). It functions in the pathway purine metabolism; GMP biosynthesis; GMP from XMP (L-Gln route): step 1/1. Functionally, catalyzes the synthesis of GMP from XMP. The polypeptide is GMP synthase [glutamine-hydrolyzing] (Xanthomonas campestris pv. campestris (strain B100)).